A 467-amino-acid chain; its full sequence is Serine/threonine-protein kinase AFC1 (467 aa).

One can recognise a Protein kinase domain in the interval 115–443 (YQILSKMGEG…AREALNHPFF (329 aa)). Residues 121–129 (MGEGTFGQV) and K144 contribute to the ATP site. Catalysis depends on D240, which acts as the Proton acceptor. A disordered region spans residues 447–467 (REQSIPPFNPNPHPFLYNQKN).

This sequence belongs to the protein kinase superfamily. CMGC Ser/Thr protein kinase family. Lammer subfamily.

It carries out the reaction L-seryl-[protein] + ATP = O-phospho-L-seryl-[protein] + ADP + H(+). It catalyses the reaction L-threonyl-[protein] + ATP = O-phospho-L-threonyl-[protein] + ADP + H(+). The enzyme catalyses L-tyrosyl-[protein] + ATP = O-phospho-L-tyrosyl-[protein] + ADP + H(+). Functionally, activator of yeast transcription factor, STE12. This is Serine/threonine-protein kinase AFC1 (AFC1) from Arabidopsis thaliana (Mouse-ear cress).